Here is a 141-residue protein sequence, read N- to C-terminus: Hemoglobin subunit alpha-A (141 aa).

A Globin domain is found at 1 to 141 (MLSASDKANV…VGLVLTAKYR (141 aa)). Histidine 58 contributes to the O2 binding site. Histidine 87 serves as a coordination point for heme b.

This sequence belongs to the globin family. There are three forms of hemoglobin in Sphenodon: A, A' and D. Hb A is a tetramer of two alpha-A and two beta-1, Hb A' is a tetramer of two alpha-a and two beta-2, Hb D is a tetramer of two alpha-D and two beta-2. As to expression, red blood cells.

In terms of biological role, involved in oxygen transport from the lung to the various peripheral tissues. The sequence is that of Hemoglobin subunit alpha-A (HBAA) from Sphenodon punctatus (Tuatara).